The primary structure comprises 115 residues: uncharacterized protein (115 aa).

Residues 1-74 (MGTGLRSQSL…VPGSLGDTEQ (74 aa)) are disordered.

This is an uncharacterized protein from Homo sapiens (Human).